A 280-amino-acid chain; its full sequence is Putative S-adenosyl-L-methionine-dependent methyltransferase FRAAL3836 (280 aa).

Residues aspartate 121 and 150-151 (DL) each bind S-adenosyl-L-methionine.

It belongs to the UPF0677 family.

Exhibits S-adenosyl-L-methionine-dependent methyltransferase activity. This Frankia alni (strain DSM 45986 / CECT 9034 / ACN14a) protein is Putative S-adenosyl-L-methionine-dependent methyltransferase FRAAL3836.